The sequence spans 464 residues: Synaptosomal-associated protein 47 (464 aa).

A disordered region spans residues 20–42 (GRLWDSSGVPQRQKRPGPWRTQT). T-SNARE coiled-coil homology domains lie at 154–216 (VADA…LTEL) and 401–463 (TSLP…MKRL).

Belongs to the SVAP1 family. As to quaternary structure, forms a complex containing SNAP47, VAMP2 and STX1A. Associates with the BLOC-1 complex. Interacts with BLOC1S6.

The protein localises to the endomembrane system. It localises to the cytoplasm. The protein resides in the perinuclear region. Functionally, plays a role in intracellular membrane fusion. This chain is Synaptosomal-associated protein 47 (SNAP47), found in Homo sapiens (Human).